Consider the following 318-residue polypeptide: Taste receptor type 2 member 7 (318 aa).

Topologically, residues 1-9 are extracellular; sequence MTDKVQTTL. Residues 10–30 traverse the membrane as a helical segment; it reads LFLAVGEFSVGILGNAFIGLV. At 31-55 the chain is on the cytoplasmic side; sequence NCMDWIKKRKIASIDLILTSLAISR. The helical transmembrane segment at 56–76 threads the bilayer; it reads ICLLCVILLDCFILVLYPDVY. The Extracellular portion of the chain corresponds to 77-94; the sequence is ATGKEMRIIDFFWILTNH. The chain crosses the membrane as a helical span at residues 95–115; the sequence is LSIWFATCLSIYYFFKIANFF. Residues 116–128 are Cytoplasmic-facing; sequence HPLFLWMKWRIDR. The helical transmembrane segment at 129 to 149 threads the bilayer; that stretch reads VISWILLGCMVLSVFISLPAT. Topologically, residues 150–187 are extracellular; the sequence is ENLNADFRFCVKAKRKTNLTWSCRVNKTQHASIKLLLN. N-linked (GlcNAc...) asparagine glycosylation is found at N167 and N175. The chain crosses the membrane as a helical span at residues 188–208; that stretch reads LATLLPFCVCLMSFFLLILSL. Residues 209 to 235 lie on the Cytoplasmic side of the membrane; that stretch reads RRHIRRMQLSATGCRDPSTEAHVRALK. Residues 236-256 form a helical membrane-spanning segment; it reads AVISFLLLFIAYYLSFLIATS. Residues 257 to 266 lie on the Extracellular side of the membrane; sequence SYFMPETELA. The helical transmembrane segment at 267–287 threads the bilayer; it reads VIFGESIALIYPSSHSFILIL. The Cytoplasmic portion of the chain corresponds to 288–318; it reads GNNKLRHASLKVIWKVMSILKGRKFQQHKQI.

The protein belongs to the G-protein coupled receptor T2R family.

Its subcellular location is the membrane. In terms of biological role, gustducin-coupled receptor implicated in the perception of bitter compounds in the oral cavity and the gastrointestinal tract. Signals through PLCB2 and the calcium-regulated cation channel TRPM5. The protein is Taste receptor type 2 member 7 (TAS2R7) of Pongo pygmaeus (Bornean orangutan).